A 976-amino-acid polypeptide reads, in one-letter code: Synaptonemal complex protein 1 (976 aa).

The short motif at 101–111 (GLSRVYSKLYK) is the Mediates head to head self-assembly of N-terminal ends element. Positions 117-120 (KKWK) match the Nuclear localization signal motif. The interaction with SYCE3 stretch occupies residues 206–362 (ETRQVYMDLN…CQLTEEKETQ (157 aa)). 4 coiled-coil regions span residues 211–316 (YMDL…SIEK), 391–439 (LRTE…LKKV), 499–685 (VKDL…VEKA), and 739–798 (EQEQ…KTQT). The tract at residues 676-770 (ENLLEEVEKA…LSVKKQLEIE (95 aa)) is required for pH-induced assembly of C-terminal ends into antiparallel tetramers. The Nuclear localization signal motif lies at 679-682 (LEEV). Positions 784–976 (NTATLKEKKD…KLKEAEKLFV (193 aa)) are DNA-binding. The Nuclear localization signal motif lies at 880 to 883 (KKRK).

Structural component of synaptonemal complexes. Homotetramer that consists of an N-terminal four-helical bundle that bifurcates into two elongated C-terminal dimeric coiled coils. This tetrameric building block potentially self-assembles into a supramolecular zipper-like lattice to mediate meiotic chromosome synapsis. Self-assembly is likely initiated by local proton density at chromosome axis, which is predicted to trigger antiparallel back to back assembly of adjacent C-terminal ends into tetrameric structures that anchor to chromosomal DNA. Then the N-terminal ends are predicted to undergo cooperative antiparallel head to head assembly at the midline of synaptonemal complexes central element to form a zipper-like lattice between properly aligned homologous chromosomes. The nascent synapsis generated by SYCP1 is stabilized through interaction with central element proteins SYCE1 and SYCE2. Interacts (via tetrameric core) with SYCE3; the interaction remodels SYCP1 homotetramers to 2:1 heterotrimers with SYCE3. SYCP1/SYCE3 heterotrimers form lattice assemblies as part of the mature synaptonemal complex via both lateral and head-to-head interactions. Forms a complex with EWSR1, PRDM9, SYCP3 and REC8; complex formation is dependent of phosphorylated form of REC8 and requires PRDM9 bound to hotspot DNA; EWSR1 joins PRDM9 with the chromosomal axis through REC8. Interacts with SPO16. Testis.

The protein localises to the nucleus. The protein resides in the chromosome. Its subcellular location is the centromere. Functionally, major component of the transverse filaments of synaptonemal complexes, formed between homologous chromosomes during meiotic prophase. Required for normal assembly of the central element of the synaptonemal complexes. Required for normal centromere pairing during meiosis. Required for normal meiotic chromosome synapsis during oocyte and spermatocyte development and for normal male and female fertility. This is Synaptonemal complex protein 1 from Homo sapiens (Human).